The chain runs to 370 residues: Probable endopolygalacturonase A (370 aa).

The first 19 residues, 1 to 19 (MPSAKPLFCLATLAGAALA), serve as a signal peptide directing secretion. Residues 20-32 (APAPSRATDFNKR) constitute a propeptide that is removed on maturation. A disulfide bridge connects residues C35 and C50. PbH1 repeat units follow at residues 162 to 192 (SDNL…DISE), 193 to 214 (STYI…AINS), 215 to 235 (GENI…SIGS), 244 to 265 (VKNV…RIKT), 273 to 295 (VEDI…VIEQ), and 307 to 352 (SNGV…DITG). D207 functions as the Proton donor in the catalytic mechanism. C209 and C225 are oxidised to a cystine. H229 is an active-site residue. An N-linked (GlcNAc...) asparagine glycan is attached at N246. Intrachain disulfides connect C335–C340 and C359–C368.

It belongs to the glycosyl hydrolase 28 family.

Its subcellular location is the secreted. It catalyses the reaction (1,4-alpha-D-galacturonosyl)n+m + H2O = (1,4-alpha-D-galacturonosyl)n + (1,4-alpha-D-galacturonosyl)m.. Involved in maceration and soft-rotting of plant tissue. Hydrolyzes the 1,4-alpha glycosidic bonds of de-esterified pectate in the smooth region of the plant cell wall. The polypeptide is Probable endopolygalacturonase A (pgaA) (Aspergillus kawachii (strain NBRC 4308) (White koji mold)).